The chain runs to 115 residues: NADH-ubiquinone oxidoreductase chain 3 (115 aa).

The next 3 helical transmembrane spans lie at 4–24 (FIVL…AFWL), 55–75 (FFLV…LLPL), and 87–107 (TMLT…YEWL).

This sequence belongs to the complex I subunit 3 family. Core subunit of respiratory chain NADH dehydrogenase (Complex I) which is composed of 45 different subunits. Interacts with TMEM186. Interacts with TMEM242.

It is found in the mitochondrion inner membrane. It catalyses the reaction a ubiquinone + NADH + 5 H(+)(in) = a ubiquinol + NAD(+) + 4 H(+)(out). Its function is as follows. Core subunit of the mitochondrial membrane respiratory chain NADH dehydrogenase (Complex I) which catalyzes electron transfer from NADH through the respiratory chain, using ubiquinone as an electron acceptor. Essential for the catalytic activity of complex I. In Reithrodontomys megalotis (Western harvest mouse), this protein is NADH-ubiquinone oxidoreductase chain 3.